The primary structure comprises 381 residues: Nitric oxide reductase FlRd-NAD(+) reductase (381 aa).

The protein belongs to the FAD-dependent oxidoreductase family. It depends on FAD as a cofactor.

The protein resides in the cytoplasm. It catalyses the reaction 2 reduced [nitric oxide reductase rubredoxin domain] + NAD(+) + H(+) = 2 oxidized [nitric oxide reductase rubredoxin domain] + NADH. Its pathway is nitrogen metabolism; nitric oxide reduction. In terms of biological role, one of at least two accessory proteins for anaerobic nitric oxide (NO) reductase. Reduces the rubredoxin moiety of NO reductase. This Aliivibrio fischeri (strain ATCC 700601 / ES114) (Vibrio fischeri) protein is Nitric oxide reductase FlRd-NAD(+) reductase.